Reading from the N-terminus, the 492-residue chain is Malonate-semialdehyde dehydrogenase (492 aa).

Positions 156, 180, 183, 184, 233, and 255 each coordinate NAD(+). Cys288 serves as the catalytic Nucleophile. Residue Glu387 participates in NAD(+) binding.

This sequence belongs to the aldehyde dehydrogenase family. IolA subfamily. In terms of assembly, homotetramer.

The enzyme catalyses 3-oxopropanoate + NAD(+) + CoA + H2O = hydrogencarbonate + acetyl-CoA + NADH + H(+). The catalysed reaction is 2-methyl-3-oxopropanoate + NAD(+) + CoA + H2O = propanoyl-CoA + hydrogencarbonate + NADH + H(+). It participates in polyol metabolism; myo-inositol degradation into acetyl-CoA; acetyl-CoA from myo-inositol: step 7/7. Catalyzes the oxidation of malonate semialdehyde (MSA) and methylmalonate semialdehyde (MMSA) into acetyl-CoA and propanoyl-CoA, respectively. Is involved in a myo-inositol catabolic pathway. Bicarbonate, and not CO2, is the end-product of the enzymatic reaction. The chain is Malonate-semialdehyde dehydrogenase from Lacticaseibacillus casei (Lactobacillus casei).